Here is a 128-residue protein sequence, read N- to C-terminus: NADH-quinone oxidoreductase subunit A (128 aa).

Helical transmembrane passes span 5 to 25, 72 to 92, and 100 to 120; these read IPIL…VVIA, LTAM…PWAV, and FALV…AYVW.

This sequence belongs to the complex I subunit 3 family. As to quaternary structure, NDH-1 is composed of 14 different subunits. Subunits NuoA, H, J, K, L, M, N constitute the membrane sector of the complex.

It is found in the cell membrane. The catalysed reaction is a quinone + NADH + 5 H(+)(in) = a quinol + NAD(+) + 4 H(+)(out). Functionally, NDH-1 shuttles electrons from NADH, via FMN and iron-sulfur (Fe-S) centers, to quinones in the respiratory chain. The immediate electron acceptor for the enzyme in this species is believed to be a menaquinone. Couples the redox reaction to proton translocation (for every two electrons transferred, four hydrogen ions are translocated across the cytoplasmic membrane), and thus conserves the redox energy in a proton gradient. This chain is NADH-quinone oxidoreductase subunit A, found in Mycobacterium bovis (strain ATCC BAA-935 / AF2122/97).